The primary structure comprises 214 residues: uncharacterized protein (214 aa).

7 consecutive transmembrane segments (helical) span residues 4–23 (VSIV…FSSF), 35–57 (SFVH…LGYY), 67–89 (QWMR…FLFT), 96–118 (VSLV…VHVY), 128–150 (ARVM…VSFS), 155–177 (LPLL…SATV), and 187–209 (TVVY…FFAV).

The protein localises to the cell membrane. This is an uncharacterized protein from Treponema pallidum (strain Nichols).